A 728-amino-acid polypeptide reads, in one-letter code: LPS-assembly protein LptD (728 aa).

Positions 1–21 are cleaved as a signal peptide; that stretch reads MSALPGFTLAALLLNVSLAEA.

Belongs to the LptD family. In terms of assembly, component of the lipopolysaccharide transport and assembly complex. Interacts with LptE and LptA.

The protein localises to the cell outer membrane. Functionally, together with LptE, is involved in the assembly of lipopolysaccharide (LPS) at the surface of the outer membrane. The polypeptide is LPS-assembly protein LptD (Thiobacillus denitrificans (strain ATCC 25259 / T1)).